The primary structure comprises 166 residues: NADPH-dependent 7-cyano-7-deazaguanine reductase (166 aa).

The active-site Thioimide intermediate is C57. D64 serves as the catalytic Proton donor. Substrate contacts are provided by residues 79 to 81 and 98 to 99; these read VES and HE.

This sequence belongs to the GTP cyclohydrolase I family. QueF type 1 subfamily.

It localises to the cytoplasm. The enzyme catalyses 7-aminomethyl-7-carbaguanine + 2 NADP(+) = 7-cyano-7-deazaguanine + 2 NADPH + 3 H(+). It participates in tRNA modification; tRNA-queuosine biosynthesis. Its function is as follows. Catalyzes the NADPH-dependent reduction of 7-cyano-7-deazaguanine (preQ0) to 7-aminomethyl-7-deazaguanine (preQ1). This is NADPH-dependent 7-cyano-7-deazaguanine reductase from Staphylococcus aureus (strain JH1).